A 199-amino-acid chain; its full sequence is Neurotrophic factor BDNF precursor form (199 aa).

The segment at 1-23 (GQGSLAYPGLRTQGNLETLSGPN) is disordered. The propeptide occupies 1–100 (GQGSLAYPGL…AANMSMRVRR (100 aa)). The span at 12–23 (TQGNLETLSGPN) shows a compositional bias: polar residues. Asn-93 carries N-linked (GlcNAc...) asparagine glycosylation. The cysteines at positions 113 and 180 are disulfide-linked.

It belongs to the NGF-beta family.

It localises to the secreted. Functionally, promotes the survival of neuronal populations that are all located either in the central nervous system or directly connected to it. This Eunectes notaeus (Yellow anaconda) protein is Neurotrophic factor BDNF precursor form (BDNF).